Consider the following 339-residue polypeptide: Glycerol-3-phosphate dehydrogenase [NAD(P)+] (339 aa).

Positions 11, 12, and 109 each coordinate NADPH. Residues Lys109, Gly140, and Ser142 each coordinate sn-glycerol 3-phosphate. Ala144 contacts NADPH. The sn-glycerol 3-phosphate site is built by Lys195, Asp249, Ser259, Arg260, and Asn261. The active-site Proton acceptor is Lys195. Arg260 serves as a coordination point for NADPH. The NADPH site is built by Val284 and Glu286.

Belongs to the NAD-dependent glycerol-3-phosphate dehydrogenase family.

The protein resides in the cytoplasm. It carries out the reaction sn-glycerol 3-phosphate + NAD(+) = dihydroxyacetone phosphate + NADH + H(+). The enzyme catalyses sn-glycerol 3-phosphate + NADP(+) = dihydroxyacetone phosphate + NADPH + H(+). The protein operates within membrane lipid metabolism; glycerophospholipid metabolism. Functionally, catalyzes the reduction of the glycolytic intermediate dihydroxyacetone phosphate (DHAP) to sn-glycerol 3-phosphate (G3P), the key precursor for phospholipid synthesis. The chain is Glycerol-3-phosphate dehydrogenase [NAD(P)+] from Lactobacillus acidophilus (strain ATCC 700396 / NCK56 / N2 / NCFM).